We begin with the raw amino-acid sequence, 109 residues long: Ribonuclease P protein component (109 aa).

The protein belongs to the RnpA family. In terms of assembly, consists of a catalytic RNA component (M1 or rnpB) and a protein subunit.

It catalyses the reaction Endonucleolytic cleavage of RNA, removing 5'-extranucleotides from tRNA precursor.. RNaseP catalyzes the removal of the 5'-leader sequence from pre-tRNA to produce the mature 5'-terminus. It can also cleave other RNA substrates such as 4.5S RNA. The protein component plays an auxiliary but essential role in vivo by binding to the 5'-leader sequence and broadening the substrate specificity of the ribozyme. In Streptococcus agalactiae serotype III (strain NEM316), this protein is Ribonuclease P protein component.